Reading from the N-terminus, the 358-residue chain is Tribbles homolog 3 (358 aa).

The interval 1–54 is disordered; sequence MRATPLAAPAGSLSRKKRLELDDNLDTERPVQKRARSGPQPRLPPCLLPLSPPT. The interaction with DDIT3/CHOP stretch occupies residues 1-127; sequence MRATPLAAPA…KHVARPTEVL (127 aa). Phosphoserine is present on Ser-12. Over residues 41-54 the composition is skewed to pro residues; the sequence is PRLPPCLLPLSPPT. A Protein kinase domain is found at 68–316; that stretch reads LGPYVLLEPE…TGILLHPWLR (249 aa).

This sequence belongs to the protein kinase superfamily. CAMK Ser/Thr protein kinase family. Tribbles subfamily. In terms of assembly, interacts with AKT1, AKT2, MAP2K1 and MAP2K7. Interacts with ATF4. Interacts with DDIT3/CHOP and inhibits its interaction with EP300/P300. Interacts with APOBEC3C. Interacts (via N-terminus) with APOBEC3A. Interacts with RELA. As to expression, highest expression in liver, pancreas, peripheral blood leukocytes and bone marrow. Also highly expressed in a number of primary lung, colon and breast tumors. Expressed in spleen, thymus, and prostate and is undetectable in other examined tissues, including testis, ovary, small intestine, colon, leukocyte, heart, brain, placenta, lung, skeletal muscle, and kidney.

Its subcellular location is the nucleus. In terms of biological role, inactive protein kinase which acts as a regulator of the integrated stress response (ISR), a process for adaptation to various stress. Inhibits the transcriptional activity of DDIT3/CHOP and is involved in DDIT3/CHOP-dependent cell death during ER stress. May play a role in programmed neuronal cell death but does not appear to affect non-neuronal cells. Acts as a negative feedback regulator of the ATF4-dependent transcription during the ISR: while TRIB3 expression is promoted by ATF4, TRIB3 protein interacts with ATF4 and inhibits ATF4 transcription activity. Disrupts insulin signaling by binding directly to Akt kinases and blocking their activation. May bind directly to and mask the 'Thr-308' phosphorylation site in AKT1. Interacts with the NF-kappa-B transactivator p65 RELA and inhibits its phosphorylation and thus its transcriptional activation activity. Interacts with MAPK kinases and regulates activation of MAP kinases. Can inhibit APOBEC3A editing of nuclear DNA. The chain is Tribbles homolog 3 (TRIB3) from Homo sapiens (Human).